The sequence spans 37 residues: Large ribosomal subunit protein bL36 (37 aa).

This sequence belongs to the bacterial ribosomal protein bL36 family.

This is Large ribosomal subunit protein bL36 from Nitratidesulfovibrio vulgaris (strain ATCC 29579 / DSM 644 / CCUG 34227 / NCIMB 8303 / VKM B-1760 / Hildenborough) (Desulfovibrio vulgaris).